Here is a 155-residue protein sequence, read N- to C-terminus: Small ribosomal subunit protein uS7 (155 aa).

Belongs to the universal ribosomal protein uS7 family. As to quaternary structure, part of the 30S ribosomal subunit. Contacts proteins S9 and S11.

In terms of biological role, one of the primary rRNA binding proteins, it binds directly to 16S rRNA where it nucleates assembly of the head domain of the 30S subunit. Is located at the subunit interface close to the decoding center, probably blocks exit of the E-site tRNA. This is Small ribosomal subunit protein uS7 from Mycoplasma mycoides subsp. mycoides SC (strain CCUG 32753 / NCTC 10114 / PG1).